The chain runs to 1489 residues: DNA-directed RNA polymerase subunit beta (1489 aa).

It belongs to the RNA polymerase beta chain family. In terms of assembly, the RNAP catalytic core consists of 2 alpha, 1 beta, 1 beta' and 1 omega subunit. When a sigma factor is associated with the core the holoenzyme is formed, which can initiate transcription.

It carries out the reaction RNA(n) + a ribonucleoside 5'-triphosphate = RNA(n+1) + diphosphate. Its function is as follows. DNA-dependent RNA polymerase catalyzes the transcription of DNA into RNA using the four ribonucleoside triphosphates as substrates. The polypeptide is DNA-directed RNA polymerase subunit beta (Koribacter versatilis (strain Ellin345)).